Here is a 65-residue protein sequence, read N- to C-terminus: Prokaryotic ubiquitin-like protein Pup (65 aa).

Basic and acidic residues predominate over residues 1 to 13; the sequence is MAQEQKQPRKSSE. The disordered stretch occupies residues 1 to 34; sequence MAQEQKQPRKSSEADEAVEAVAETDVSERKEALD. The segment at 21–59 is ARC ATPase binding; it reads VAETDVSERKEALDSDVDDILDEIDDVLETNAEDFVKSF. Residues 25–49 adopt a coiled-coil conformation; that stretch reads DVSERKEALDSDVDDILDEIDDVLE. An Isoglutamyl lysine isopeptide (Glu-Lys) (interchain with K-? in acceptor proteins) cross-link involves residue E65.

This sequence belongs to the prokaryotic ubiquitin-like protein family. Strongly interacts with the proteasome-associated ATPase ARC through a hydrophobic interface; the interacting region of Pup lies in its C-terminal half. There is one Pup binding site per ARC hexamer ring.

Its pathway is protein degradation; proteasomal Pup-dependent pathway. Functionally, protein modifier that is covalently attached to lysine residues of substrate proteins, thereby targeting them for proteasomal degradation. The tagging system is termed pupylation. This Nocardioides sp. (strain ATCC BAA-499 / JS614) protein is Prokaryotic ubiquitin-like protein Pup.